Reading from the N-terminus, the 370-residue chain is Peptidyl-prolyl cis-trans isomerase D (370 aa).

S5 is modified (phosphoserine). One can recognise a PPIase cyclophilin-type domain in the interval F19 to E183. N6-acetyllysine is present on K171. Residues K185–D215 are chaperone activity. S198 carries the post-translational modification Phosphoserine. Positions K214–A370 are interaction with HSP90AB1. 3 TPR repeats span residues T223–S256, L273–N306, and T307–D340.

This sequence belongs to the cyclophilin-type PPIase family. PPIase D subfamily. Identified in ESR1 or NR3C1/GCR steroid receptor-chaperone complexes. Found in HSP90 chaperone complexes with kinase clients LCK or EIF2AK1. Two monomers associate with one HSP90 homodimer. Interacts with HSP90AA1. Interacts with HSP90AB1; PPID and FKBP4 compete for binding to HSP90AB1 and the interaction is mutually exclusive with the PPID:HSPA8 interaction. Interacts with HSPA8; PPID and STIP1 but not FKBP4 compete for binding to HSPA8 and the interaction is mutually exclusive with the PPID:HSP90AB1 interaction. Interacts with S100A1 and S100A2; the interactions dissociate the PPID:HSP90AA1 interaction. Interacts with S100A6. Interacts with MYB, ILF2, XRCC6, RACK1 and RPS3. Interacts with cytoplasmic dynein 1 intermediate chain (DYNC1I1 or DYNC1I2). As to expression, widely expressed.

The protein resides in the cytoplasm. It is found in the nucleus. Its subcellular location is the nucleolus. The protein localises to the nucleoplasm. The enzyme catalyses [protein]-peptidylproline (omega=180) = [protein]-peptidylproline (omega=0). With respect to regulation, less sensitive to inhibition by cyclosporin A than is CYP-18. In terms of biological role, PPIase that catalyzes the cis-trans isomerization of proline imidic peptide bonds in oligopeptides and may therefore assist protein folding. Proposed to act as a co-chaperone in HSP90 complexes such as in unligated steroid receptors heterocomplexes. Different co-chaperones seem to compete for association with HSP90 thus establishing distinct HSP90-co-chaperone-receptor complexes with the potential to exert tissue-specific receptor activity control. May have a preference for estrogen receptor complexes and is not found in glucocorticoid receptor complexes. May be involved in cytoplasmic dynein-dependent movement of the receptor from the cytoplasm to the nucleus. May regulate MYB by inhibiting its DNA-binding activity. Involved in regulation of AHR signaling by promoting the formation of the AHR:ARNT dimer; the function is independent of HSP90 but requires the chaperone activity. Involved in regulation of UV radiation-induced apoptosis. Promotes cell viability in anaplastic lymphoma kinase-positive anaplastic large-cell lymphoma (ALK+ ALCL) cell lines. Its function is as follows. (Microbial infection) May be involved in hepatitis C virus (HCV) replication and release. The sequence is that of Peptidyl-prolyl cis-trans isomerase D from Homo sapiens (Human).